We begin with the raw amino-acid sequence, 168 residues long: Bcl2-associated agonist of cell death (168 aa).

Position 1 is an N-acetylmethionine (M1). Residues 1–105 (MFQIPEFEPS…RSRSAPPNLW (105 aa)) are disordered. Phosphoserine is present on S25. Residues 49–60 (SHQQEQPTSSSH) are compositionally biased toward polar residues. 2 positions are modified to phosphoserine: S75 and S91. Asymmetric dimethylarginine; by PRMT1 occurs at positions 94 and 96. At S97 the chain carries Phosphoserine. S99 is subject to Phosphoserine; by PKA, PKB, PAK1, RPS6KA1, RPS6KB1 and PKC/PRKCQ. S99 is subject to Phosphoserine; by PKB/AKT1. The BH3 motif lies at 110-124 (YGRELRRMSDEFVDS). 2 positions are modified to phosphoserine: S118 and S134. The tract at residues 125 to 145 (FKKGLPRPKSAGTATQMRQSS) is disordered. The segment covering 136 to 145 (GTATQMRQSS) has biased composition (polar residues). The residue at position 161 (R161) is an Omega-N-methylarginine.

Belongs to the Bcl-2 family. In terms of assembly, forms heterodimers with the anti-apoptotic proteins, Bcl-X(L), Bcl-2 and Bcl-W. Also binds protein S100A10. The Ser-75/Ser-99 phosphorylated form binds 14-3-3 proteins. Interacts with AKT1 and PIM3. Interacts (via BH3 domain) with NOL3 (via CARD domain); preventing the association of BAD with BCL2. Interacts with HIF3A (via C-terminus domain); the interaction reduces the binding between BAD and BAX. Interacts with GIMAP3/IAN4 and GIMAP5/IAN5. In terms of processing, phosphorylated on one or more of Ser-75, Ser-99, Ser-118 and Ser-134 in response to survival stimuli, which blocks its pro-apoptotic activity. Phosphorylation on Ser-99 or Ser-75 promotes heterodimerization with 14-3-3 proteins. This interaction then facilitates the phosphorylation at Ser-118, a site within the BH3 motif, leading to the release of Bcl-X(L) and the promotion of cell survival. Ser-99 is the major site of AKT/PKB phosphorylation, Ser-118 the major site of protein kinase A (CAPK) phosphorylation. Phosphorylation at Ser-99 by PKB/AKT1 is almost completely blocked by the apoptotic C-terminus cleavage product of PKN2 generated by caspases-3 activity during apoptosis. Methylation at Arg-94 and Arg-96 by PRMT1 inhibits Akt-mediated phosphorylation at Ser-99. Expressed in a wide variety of tissues.

The protein resides in the mitochondrion outer membrane. It localises to the cytoplasm. Its function is as follows. Promotes cell death. Successfully competes for the binding to Bcl-X(L), Bcl-2 and Bcl-W, thereby affecting the level of heterodimerization of these proteins with BAX. Can reverse the death repressor activity of Bcl-X(L), but not that of Bcl-2. Appears to act as a link between growth factor receptor signaling and the apoptotic pathways. This is Bcl2-associated agonist of cell death (BAD) from Homo sapiens (Human).